The following is a 246-amino-acid chain: Pyruvate formate-lyase 1-activating enzyme (246 aa).

A Radical SAM core domain is found at 16–239 (VDGPGIRFIT…MERVKGILEQ (224 aa)). Residues Cys30, Cys34, and Cys37 each contribute to the [4Fe-4S] cluster site. S-adenosyl-L-methionine-binding positions include 36–38 (YCH), Gly79, 130–132 (DLK), and His203.

The protein belongs to the organic radical-activating enzymes family. It depends on [4Fe-4S] cluster as a cofactor.

The protein resides in the cytoplasm. It carries out the reaction glycyl-[formate C-acetyltransferase] + reduced [flavodoxin] + S-adenosyl-L-methionine = glycin-2-yl radical-[formate C-acetyltransferase] + semiquinone [flavodoxin] + 5'-deoxyadenosine + L-methionine + H(+). Activation of pyruvate formate-lyase 1 under anaerobic conditions by generation of an organic free radical, using S-adenosylmethionine and reduced flavodoxin as cosubstrates to produce 5'-deoxy-adenosine. In Escherichia coli O157:H7, this protein is Pyruvate formate-lyase 1-activating enzyme (pflA).